The sequence spans 148 residues: Secretory phospholipase A2 (148 aa).

Residues 1 to 23 form the signal peptide; that stretch reads MKLSVLLALGASSLAAAAPAATA. N-linked (GlcNAc...) asparagine glycosylation occurs at N61. A disulfide bond links C62 and C78. H81 is a catalytic residue. D82 is a Ca(2+) binding site.

It belongs to the phospholipase A2 family. It depends on Ca(2+) as a cofactor.

The protein resides in the secreted. The enzyme catalyses a 1,2-diacyl-sn-glycero-3-phosphocholine + H2O = a 1-acyl-sn-glycero-3-phosphocholine + a fatty acid + H(+). Functionally, secretory phospholipase that catalyzes the calcium-dependent hydrolysis of the 2-acyl groups in 3-sn-phosphoglycerides. Increases the ability to utilize host-derived nutrients and lipids, and promotes lipid dropplets accumulation. Plays a role in virulence. The protein is Secretory phospholipase A2 of Arthroderma benhamiae (strain ATCC MYA-4681 / CBS 112371) (Trichophyton mentagrophytes).